The following is a 331-amino-acid chain: Ferredoxin--NADP reductase (331 aa).

Residues Thr-14, Glu-33, Gln-41, Tyr-46, Val-86, Phe-120, Asp-284, and Ser-327 each coordinate FAD.

Belongs to the ferredoxin--NADP reductase type 2 family. As to quaternary structure, homodimer. Requires FAD as cofactor.

The enzyme catalyses 2 reduced [2Fe-2S]-[ferredoxin] + NADP(+) + H(+) = 2 oxidized [2Fe-2S]-[ferredoxin] + NADPH. In Picrophilus torridus (strain ATCC 700027 / DSM 9790 / JCM 10055 / NBRC 100828 / KAW 2/3), this protein is Ferredoxin--NADP reductase.